The chain runs to 293 residues: Homoserine kinase (293 aa).

80–90 (RPASGLGSSAA) provides a ligand contact to ATP.

This sequence belongs to the GHMP kinase family. Homoserine kinase subfamily.

It is found in the cytoplasm. The catalysed reaction is L-homoserine + ATP = O-phospho-L-homoserine + ADP + H(+). It functions in the pathway amino-acid biosynthesis; L-threonine biosynthesis; L-threonine from L-aspartate: step 4/5. In terms of biological role, catalyzes the ATP-dependent phosphorylation of L-homoserine to L-homoserine phosphate. The chain is Homoserine kinase from Halorubrum lacusprofundi (strain ATCC 49239 / DSM 5036 / JCM 8891 / ACAM 34).